Reading from the N-terminus, the 153-residue chain is Large ribosomal subunit protein uL22 (153 aa).

The protein belongs to the universal ribosomal protein uL22 family. In terms of assembly, part of the 50S ribosomal subunit.

Functionally, this protein binds specifically to 23S rRNA. It makes multiple contacts with different domains of the 23S rRNA in the assembled 50S subunit and ribosome. In terms of biological role, the globular domain of the protein is located near the polypeptide exit tunnel on the outside of the subunit, while an extended beta-hairpin is found that lines the wall of the exit tunnel in the center of the 70S ribosome. The chain is Large ribosomal subunit protein uL22 from Methanococcus vannielii (strain ATCC 35089 / DSM 1224 / JCM 13029 / OCM 148 / SB).